Reading from the N-terminus, the 208-residue chain is MNSRFTSAFTPFAVSLGLLLVMTSAFPTPGPLGEDFKNDTTPGRLLLTTPEKTEALIKRMVDKISAMRKEICEKNDECESSKDTLAENKLNLPKMEEKDGCFQSGFNQAICLIRTTAGLLEYQIYLDYLQNEYEGNRENVRDLRKNIRTLIQILKQKIADLITTPATNTDLLEKMQSSNEWVKNAKIILILRNLENFLQFSLRAIRMK.

A signal peptide spans 1 to 29; sequence MNSRFTSAFTPFAVSLGLLLVMTSAFPTP. N-linked (GlcNAc...) asparagine glycosylation occurs at asparagine 38. A disulfide bridge links cysteine 72 with cysteine 78. Serine 81 bears the Phosphoserine mark. An intrachain disulfide couples cysteine 101 to cysteine 111.

It belongs to the IL-6 superfamily. In terms of assembly, component of a hexamer of two molecules each of IL6, IL6R and IL6ST; first binds to IL6R to associate with the signaling subunit IL6ST. Interacts with IL6R (via the N-terminal ectodomain); this interaction may be affected by IL6R-binding with SORL1, hence decreasing IL6 cis signaling. Interacts with SORL1 (via the N-terminal ectodomain); this interaction leads to IL6 internalization and lysosomal degradation. May form a trimeric complex with the soluble SORL1 ectodomain and soluble IL6R receptor; this interaction might stabilize circulating IL6, hence promoting IL6 trans signaling.

It is found in the secreted. Cytokine with a wide variety of biological functions in immunity, tissue regeneration, and metabolism. Binds to IL6R, then the complex associates to the signaling subunit IL6ST/gp130 to trigger the intracellular IL6-signaling pathway. The interaction with the membrane-bound IL6R and IL6ST stimulates 'classic signaling', whereas the binding of IL6 and soluble IL6R to IL6ST stimulates 'trans-signaling'. Alternatively, 'cluster signaling' occurs when membrane-bound IL6:IL6R complexes on transmitter cells activate IL6ST receptors on neighboring receiver cells. In terms of biological role, IL6 is a potent inducer of the acute phase response. Rapid production of IL6 contributes to host defense during infection and tissue injury, but excessive IL6 synthesis is involved in disease pathology. In the innate immune response, is synthesized by myeloid cells, such as macrophages and dendritic cells, upon recognition of pathogens through toll-like receptors (TLRs) at the site of infection or tissue injury. In the adaptive immune response, is required for the differentiation of B cells into immunoglobulin-secreting cells. Plays a major role in the differentiation of CD4(+) T cell subsets. Essential factor for the development of T follicular helper (Tfh) cells that are required for the induction of germinal-center formation. Required to drive naive CD4(+) T cells to the Th17 lineage. Also required for proliferation of myeloma cells and the survival of plasmablast cells. Functionally, acts as an essential factor in bone homeostasis and on vessels directly or indirectly by induction of VEGF, resulting in increased angiogenesis activity and vascular permeability. Induces, through 'trans-signaling' and synergistically with IL1B and TNF, the production of VEGF. Involved in metabolic controls, is discharged into the bloodstream after muscle contraction increasing lipolysis and improving insulin resistance. 'Trans-signaling' in central nervous system also regulates energy and glucose homeostasis. Mediates, through GLP-1, crosstalk between insulin-sensitive tissues, intestinal L cells and pancreatic islets to adapt to changes in insulin demand. Also acts as a myokine. Plays a protective role during liver injury, being required for maintenance of tissue regeneration. Also has a pivotal role in iron metabolism by regulating HAMP/hepcidin expression upon inflammation or bacterial infection. Through activation of IL6ST-YAP-NOTCH pathway, induces inflammation-induced epithelial regeneration. This Bubalus bubalis (Domestic water buffalo) protein is Interleukin-6 (IL6).